Reading from the N-terminus, the 218-residue chain is Cold-regulated protein 28 (218 aa).

2 disordered regions span residues 1–51 and 166–218; these read MEND…ADSK and TKHS…KPRT. Low complexity predominate over residues 20–37; that stretch reads EASAESQSESTLSNSLDS. Positions 186-207 are enriched in basic and acidic residues; the sequence is GEVSKKREREANNDDSSLKEDQ.

It is found in the nucleus. Its function is as follows. Together with COR27, involved in central circadian clock regulation and in flowering promotion, by binding to the chromatin of clock-associated evening genes TOC1, PRR5, ELF4 and cold-responsive genes in order to repress their transcription. Negative regulator of freezing tolerance. This chain is Cold-regulated protein 28, found in Arabidopsis thaliana (Mouse-ear cress).